The primary structure comprises 77 residues: Large ribosomal subunit protein bL28 (77 aa).

This sequence belongs to the bacterial ribosomal protein bL28 family.

The protein is Large ribosomal subunit protein bL28 of Ralstonia pickettii (strain 12J).